We begin with the raw amino-acid sequence, 313 residues long: L-lactate dehydrogenase (313 aa).

Residues Val11, Asp32, Arg37, Tyr62, and 76 to 77 (GV) contribute to the NAD(+) site. Substrate contacts are provided by residues Gln79, Arg85, and 117-120 (NPVD). Residues 115–117 (ASN) and Ser143 contribute to the NAD(+) site. Residue 148-151 (DTAR) coordinates substrate. Beta-D-fructose 1,6-bisphosphate is bound by residues Arg153 and His168. His175 functions as the Proton acceptor in the catalytic mechanism. Position 221 is a phosphotyrosine (Tyr221). Thr230 contacts substrate.

The protein belongs to the LDH/MDH superfamily. LDH family. Homotetramer.

Its subcellular location is the cytoplasm. The catalysed reaction is (S)-lactate + NAD(+) = pyruvate + NADH + H(+). Its pathway is fermentation; pyruvate fermentation to lactate; (S)-lactate from pyruvate: step 1/1. Allosterically activated by fructose 1,6-bisphosphate (FBP). Catalyzes the conversion of lactate to pyruvate. The chain is L-lactate dehydrogenase from Geotalea daltonii (strain DSM 22248 / JCM 15807 / FRC-32) (Geobacter daltonii).